A 434-amino-acid chain; its full sequence is Acyl transferase 15 (434 aa).

Catalysis depends on proton acceptor residues H164 and D371.

It belongs to the plant acyltransferase family.

Its function is as follows. Involved in the incorporation of ferulate into the cell wall. This Oryza sativa subsp. japonica (Rice) protein is Acyl transferase 15.